The sequence spans 312 residues: Glycerol-3-phosphate phosphatase (312 aa).

The Nucleophile role is filled by aspartate 30. Residues aspartate 30, aspartate 32, and aspartate 251 each coordinate Mg(2+). Aspartate 32 serves as the catalytic Proton donor.

The protein belongs to the HAD-like hydrolase superfamily. CbbY/CbbZ/Gph/YieH family. In terms of assembly, homodimer. Requires Mg(2+) as cofactor.

It catalyses the reaction O-phospho-L-tyrosyl-[protein] + H2O = L-tyrosyl-[protein] + phosphate. The enzyme catalyses sn-glycerol 1-phosphate + H2O = glycerol + phosphate. The catalysed reaction is sn-glycerol 3-phosphate + H2O = glycerol + phosphate. Its function is as follows. Glycerol-3-phosphate phosphatase hydrolyzing glycerol-3-phosphate into glycerol. Thereby, regulates the cellular levels of glycerol-3-phosphate a metabolic intermediate of glucose, lipid and energy metabolism. Was also shown to have a 2-phosphoglycolate phosphatase activity and a tyrosine-protein phosphatase activity. However, their physiological relevance is unclear. In vitro, also has a phosphatase activity toward ADP, ATP, GDP and GTP. The protein is Glycerol-3-phosphate phosphatase of Gallus gallus (Chicken).